A 149-amino-acid chain; its full sequence is Endoribonuclease YbeY (149 aa).

3 residues coordinate Zn(2+): His-116, His-120, and His-126.

This sequence belongs to the endoribonuclease YbeY family. Requires Zn(2+) as cofactor.

It is found in the cytoplasm. In terms of biological role, single strand-specific metallo-endoribonuclease involved in late-stage 70S ribosome quality control and in maturation of the 3' terminus of the 16S rRNA. The protein is Endoribonuclease YbeY of Nocardioides sp. (strain ATCC BAA-499 / JS614).